A 537-amino-acid chain; its full sequence is MSNQPDHIIIFDTTLRDGEQSPGASLTVEEKLTIARALARLGVDIIEAGFPYASPGDFEAVQKIAKTVGNESGPRICGLARATKNDIKAAGEALKPAFKSRIHTFIATSDIHLKHKLKKTRQEVLAIVPEMVAYAKTFTDDVEFSPEDAGRSDPEFMYQVLETAIAAGATTVNIPDTVGYTTPSEFGALIKGIKDNVPNIDQAIISVHGHDDLGLAVANFLEALKNGARQLECTINGIGERAGNAALEELVMALHVRRQYFNPFLGRPVDSMEPLTNINTKEIYKTSRLVSNLTGMIVQPNKAIVGANAFAHESGIHQDGVLKNKLTYEIMDAESIGLTNNQIVLGKLSGRNAFRTRLDELGFELSERDLNNAFLRFKEVADKKKEITDWDLEAIVNDEIQQAPELFRLELVQVSCGDHSAPTATVTLRTPEGKELTDAAIGTGPVDAVYKAINRVVNVPNELIEFSVKSVTAGIDAMGEVTIRLRHEGRIYSGYAANTDIITASARAYISALNRLYGAIQEQTKVHPSEPVLTSKN.

Positions 8–273 (IIIFDTTLRD…FLGRPVDSME (266 aa)) constitute a Pyruvate carboxyltransferase domain. The Mn(2+) site is built by Asp-17, His-208, His-210, and Asn-244. The interval 408–537 (RLELVQVSCG…PSEPVLTSKN (130 aa)) is regulatory domain.

The protein belongs to the alpha-IPM synthase/homocitrate synthase family. LeuA type 1 subfamily. In terms of assembly, homodimer. The cofactor is Mn(2+).

The protein localises to the cytoplasm. It carries out the reaction 3-methyl-2-oxobutanoate + acetyl-CoA + H2O = (2S)-2-isopropylmalate + CoA + H(+). It participates in amino-acid biosynthesis; L-leucine biosynthesis; L-leucine from 3-methyl-2-oxobutanoate: step 1/4. Its function is as follows. Catalyzes the condensation of the acetyl group of acetyl-CoA with 3-methyl-2-oxobutanoate (2-ketoisovalerate) to form 3-carboxy-3-hydroxy-4-methylpentanoate (2-isopropylmalate). This chain is 2-isopropylmalate synthase, found in Crocosphaera subtropica (strain ATCC 51142 / BH68) (Cyanothece sp. (strain ATCC 51142)).